An 82-amino-acid chain; its full sequence is Cortexin-1 (82 aa).

Residues 1–20 form a disordered region; sequence MSAPWTLSPEPLPPSTGPPV. The chain crosses the membrane as a helical span at residues 30 to 50; the sequence is TVFAFVLCLLVVLVLLMVRCV.

It belongs to the cortexin family. In terms of tissue distribution, neuron specific.

The protein resides in the membrane. Functionally, may mediate extracellular or intracellular signaling of cortical neurons during forebrain development. The chain is Cortexin-1 (Ctxn1) from Rattus norvegicus (Rat).